A 170-amino-acid chain; its full sequence is Photosystem I assembly protein Ycf3 (170 aa).

TPR repeat units lie at residues 35–69 (AFTY…EIDP), 73–106 (SYIL…NPSL), and 121–154 (GEQA…APGN).

It belongs to the Ycf3 family.

The protein resides in the plastid. It localises to the chloroplast thylakoid membrane. Its function is as follows. Essential for the assembly of the photosystem I (PSI) complex. May act as a chaperone-like factor to guide the assembly of the PSI subunits. This chain is Photosystem I assembly protein Ycf3, found in Cycas taitungensis (Prince sago).